A 235-amino-acid polypeptide reads, in one-letter code: Probable transglycosylase IsaA (235 aa).

A signal peptide spans 1–28; it reads MKKTVIASTLAVSLGIAGYGLSGHEAHA. Residues 95–115 are compositionally biased toward polar residues; it reads ESSSNQEVSANTQSSNTNVQA. A disordered region spans residues 95–150; it reads ESSSNQEVSANTQSSNTNVQAVSAPTSSESRSYSTSTTSYSAPSHNYSSHSSSVRL. A compositionally biased stretch (low complexity) spans 117-147; the sequence is SAPTSSESRSYSTSTTSYSAPSHNYSSHSSS.

Belongs to the transglycosylase family. IsaA subfamily.

The protein localises to the secreted. Functionally, is able to cleave peptidoglycan. The polypeptide is Probable transglycosylase IsaA (isaA) (Staphylococcus epidermidis (strain ATCC 35984 / DSM 28319 / BCRC 17069 / CCUG 31568 / BM 3577 / RP62A)).